Here is a 315-residue protein sequence, read N- to C-terminus: Calumenin (315 aa).

The N-terminal stretch at 1-19 (MNKRPLLLCLGLWVACTLS) is a signal peptide. EF-hand domains lie at 68–103 (ESKERLGMIVGKIDLDNDGYVTEGELTAWIKKAQKK), 104–139 (YVYDNVERQWQEFDLSQDGLVSWDEYRNVTYGTYLD), 151–186 (QMMIRDERRFKMADKDGDLVATKEEFTAFLHPEEFD), 188–223 (MKDIVVLETMEDIDKNGDGLIDLEEYIGDMYNHDGD), 229–264 (WVKTEREQFMEFRDKNHDGKMDKEETKDWILPSDYD), and 265–300 (HSEAESRHLVYESDHNQDGKLTREEIVDKYDLFVGS). The Ca(2+) site is built by D81, D83, D85, Y87, E92, D117, S119, D121, and E128. An N-linked (GlcNAc...) asparagine glycan is attached at N131. Residues D164, D166, D168, E175, D201, N203, D205, E212, D242, N244, D246, K248, E253, D278, N280, D282, K284, and E289 each coordinate Ca(2+). The short motif at 312 to 315 (HDEF) is the Prevents secretion from ER element.

It belongs to the CREC family. In terms of assembly, interacts with ggcx.

It is found in the endoplasmic reticulum membrane. It localises to the golgi apparatus. The protein localises to the secreted. The protein resides in the melanosome. Its subcellular location is the sarcoplasmic reticulum lumen. Its function is as follows. Involved in regulation of vitamin K-dependent carboxylation of multiple N-terminal glutamate residues. Seems to inhibit gamma-carboxylase ggcx. Binds 7 calcium ions with a low affinity. The protein is Calumenin (calu) of Xenopus laevis (African clawed frog).